Reading from the N-terminus, the 89-residue chain is Cell division topological specificity factor (89 aa).

Belongs to the MinE family.

In terms of biological role, prevents the cell division inhibition by proteins MinC and MinD at internal division sites while permitting inhibition at polar sites. This ensures cell division at the proper site by restricting the formation of a division septum at the midpoint of the long axis of the cell. The sequence is that of Cell division topological specificity factor from Clostridium beijerinckii (strain ATCC 51743 / NCIMB 8052) (Clostridium acetobutylicum).